Reading from the N-terminus, the 1394-residue chain is DNA-directed RNA polymerase subunit beta'' (1394 aa).

Zn(2+) is bound by residues Cys-224, Cys-295, Cys-302, and Cys-305.

The protein belongs to the RNA polymerase beta' chain family. RpoC2 subfamily. In terms of assembly, in plastids the minimal PEP RNA polymerase catalytic core is composed of four subunits: alpha, beta, beta', and beta''. When a (nuclear-encoded) sigma factor is associated with the core the holoenzyme is formed, which can initiate transcription. It depends on Zn(2+) as a cofactor.

The protein resides in the plastid. The protein localises to the chloroplast. It carries out the reaction RNA(n) + a ribonucleoside 5'-triphosphate = RNA(n+1) + diphosphate. Functionally, DNA-dependent RNA polymerase catalyzes the transcription of DNA into RNA using the four ribonucleoside triphosphates as substrates. This chain is DNA-directed RNA polymerase subunit beta'', found in Cucumis sativus (Cucumber).